The following is a 121-amino-acid chain: Basic phospholipase A2 homolog AppP2 (121 aa).

7 cysteine pairs are disulfide-bonded: Cys-26–Cys-115, Cys-28–Cys-44, Cys-43–Cys-95, Cys-49–Cys-121, Cys-50–Cys-88, Cys-57–Cys-81, and Cys-75–Cys-86. The interval 105–117 (KKYKAYFKLKCKK) is important for membrane-damaging activities in eukaryotes and bacteria; heparin-binding.

It belongs to the phospholipase A2 family. Group II subfamily. K49 sub-subfamily. As to quaternary structure, monomer. Expressed by the venom gland.

The protein resides in the secreted. Functionally, snake venom phospholipase A2 (PLA2) that lacks enzymatic activity. Displays edema-inducing activities. Is myotoxic. A model of myotoxic mechanism has been proposed: an apo Lys49-PLA2 is activated by the entrance of a hydrophobic molecule (e.g. fatty acid) at the hydrophobic channel of the protein leading to a reorientation of a monomer. This reorientation causes a transition between 'inactive' to 'active' states, causing alignment of C-terminal and membrane-docking sites (MDoS) side-by-side and putting the membrane-disruption sites (MDiS) in the same plane, exposed to solvent and in a symmetric position for both monomers. The MDoS region stabilizes the toxin on membrane by the interaction of charged residues with phospholipid head groups. Subsequently, the MDiS region destabilizes the membrane with penetration of hydrophobic residues. This insertion causes a disorganization of the membrane, allowing an uncontrolled influx of ions (i.e. calcium and sodium), and eventually triggering irreversible intracellular alterations and cell death. The chain is Basic phospholipase A2 homolog AppP2 from Agkistrodon piscivorus piscivorus (Eastern cottonmouth).